The sequence spans 111 residues: Nucleoid-associated protein Cphamn1_1179 (111 aa).

It belongs to the YbaB/EbfC family. As to quaternary structure, homodimer.

The protein resides in the cytoplasm. It localises to the nucleoid. Its function is as follows. Binds to DNA and alters its conformation. May be involved in regulation of gene expression, nucleoid organization and DNA protection. The polypeptide is Nucleoid-associated protein Cphamn1_1179 (Chlorobium phaeobacteroides (strain BS1)).